Here is a 261-residue protein sequence, read N- to C-terminus: MIHSKKLTLGICLVLLIILIGGCVIMTKTNGRNAQIKENFNKTLSVYPTKNLDDFYDKEGFRDQEFDKRDKGTWIIYSEMVIEPKGKNMESRGMVLYINRNTRTTKGNFIVTEITEDSKGYSRSKEKKYPVKMENNRIIPTKPIPDDKLKKEIENFKFFVQYGNFKDFKDYKNGDISYNPNVPSYSAKYQLNNDDYNVQQLRKRYHIPTKQAPELKLKGSGNLKGSSVGSKDLEFTFVENQEENIYFSDSVEFTPSEDDKS.

The N-terminal stretch at Met1–Gly22 is a signal peptide. The N-palmitoyl cysteine moiety is linked to residue Cys23. A lipid anchor (S-diacylglycerol cysteine) is attached at Cys23.

The protein belongs to the staphylococcal tandem lipoprotein family.

It is found in the cell membrane. This is an uncharacterized protein from Staphylococcus aureus (strain USA300).